The following is a 294-amino-acid chain: Nucleoside-specific channel-forming protein Tsx (294 aa).

Positions 1-22 (MKKTLLAAGAVVALSTTFAAGA) are cleaved as a signal peptide.

Belongs to the nucleoside-specific channel-forming outer membrane porin (Tsx) (TC 1.B.10) family.

Its subcellular location is the cell outer membrane. Functions as a substrate-specific channel for nucleosides and deoxynucleosides. Also functions in albicidin uptake and as receptor for colicin K. Also is a receptor for several Tsx-specific bacteriophages. The chain is Nucleoside-specific channel-forming protein Tsx from Klebsiella pneumoniae.